The primary structure comprises 360 residues: N-acetylmuramoyl-L-alanine amidase CwlL (360 aa).

Positions 1–39 are cleaved as a signal peptide; that stretch reads MVKVVKNFVKVNQYTRPGLKLAGVKGIVMHYTATPGASA. In terms of domain architecture, N-acetylmuramoyl-L-alanine amidase spans 40 to 154; that stretch reads LNERDYFNGT…DVTNKICPAP (115 aa). 4 repeat units span residues 166–191, 196–259, 265–289, and 291–355. 2 X approximate repeats regions lie at residues 166–289 and 196–355; these read RKKV…KVKS and LKKG…KAKL.

The protein belongs to the N-acetylmuramoyl-L-alanine amidase 2 family.

The protein resides in the secreted. The enzyme catalyses Hydrolyzes the link between N-acetylmuramoyl residues and L-amino acid residues in certain cell-wall glycopeptides.. The protein is N-acetylmuramoyl-L-alanine amidase CwlL (cwlL) of Bacillus licheniformis.